The following is a 292-amino-acid chain: Ribosomal protein L11 methyltransferase (292 aa).

4 residues coordinate S-adenosyl-L-methionine: Thr-145, Gly-166, Asp-188, and Asn-229.

This sequence belongs to the methyltransferase superfamily. PrmA family.

Its subcellular location is the cytoplasm. It catalyses the reaction L-lysyl-[protein] + 3 S-adenosyl-L-methionine = N(6),N(6),N(6)-trimethyl-L-lysyl-[protein] + 3 S-adenosyl-L-homocysteine + 3 H(+). Functionally, methylates ribosomal protein L11. This is Ribosomal protein L11 methyltransferase from Alteromonas mediterranea (strain DSM 17117 / CIP 110805 / LMG 28347 / Deep ecotype).